A 102-amino-acid chain; its full sequence is Small ribosomal subunit protein uS14 (102 aa).

Belongs to the universal ribosomal protein uS14 family. As to quaternary structure, part of the 30S ribosomal subunit. Contacts proteins S3 and S10.

Binds 16S rRNA, required for the assembly of 30S particles and may also be responsible for determining the conformation of the 16S rRNA at the A site. The sequence is that of Small ribosomal subunit protein uS14 from Dichelobacter nodosus (strain VCS1703A).